We begin with the raw amino-acid sequence, 369 residues long: Cobalt-precorrin-5B C(1)-methyltransferase (369 aa).

Belongs to the CbiD family.

The enzyme catalyses Co-precorrin-5B + S-adenosyl-L-methionine = Co-precorrin-6A + S-adenosyl-L-homocysteine. Its pathway is cofactor biosynthesis; adenosylcobalamin biosynthesis; cob(II)yrinate a,c-diamide from sirohydrochlorin (anaerobic route): step 6/10. Catalyzes the methylation of C-1 in cobalt-precorrin-5B to form cobalt-precorrin-6A. The protein is Cobalt-precorrin-5B C(1)-methyltransferase of Brucella melitensis biotype 2 (strain ATCC 23457).